The chain runs to 315 residues: MTIDSGFNHITVLLDEAVEALAVRPDGCYLDGTFGRGGHSRLILSKLGPQGRLLGFDKDPQAIATGQALAAEDGRFVVVQRSFAELGSEVAERGLAGKVSGVLLDLGVSSPQLDDPERGFSFLNDGPLDMRMDPTRGISAAQFIATAPVEEIARVFKEYGEERFSGRMARAVVERREIQPFERTADLAEVLKVANPAWEKGKNPATRAFQGLRIHVNNELGDLEAGLEAALESLEVGGRLVVISFHSLEDRIVKLFMRRLVKGESDNLPRNLPVRFEAFVPKIKIHGKAQFASEAELKANPRARSAVMRVAEKLR.

S-adenosyl-L-methionine contacts are provided by residues 37–39 (GGH), Asp-57, Phe-83, Asp-105, and Gln-112.

The protein belongs to the methyltransferase superfamily. RsmH family.

The protein localises to the cytoplasm. The catalysed reaction is cytidine(1402) in 16S rRNA + S-adenosyl-L-methionine = N(4)-methylcytidine(1402) in 16S rRNA + S-adenosyl-L-homocysteine + H(+). Its function is as follows. Specifically methylates the N4 position of cytidine in position 1402 (C1402) of 16S rRNA. The polypeptide is Ribosomal RNA small subunit methyltransferase H (Pseudomonas fluorescens (strain ATCC BAA-477 / NRRL B-23932 / Pf-5)).